A 101-amino-acid chain; its full sequence is Interleukin-8 (101 aa).

An N-terminal signal peptide occupies residues 1–22 (MTSKLAIALLAAFLLSAALCKA). Arg-27 bears the Citrulline mark. Cystine bridges form between Cys-34/Cys-61 and Cys-36/Cys-77.

It belongs to the intercrine alpha (chemokine CxC) family. Homodimer. Citrullination at Arg-27 prevents proteolysis, and dampens tissue inflammation, it also enhances leukocytosis, possibly through impaired chemokine clearance from the blood circulation.

The protein resides in the secreted. In terms of biological role, chemotactic factor that mediates inflammatory response by attracting neutrophils, basophils, and T-cells to clear pathogens and protect the host from infection. Also plays an important role in neutrophil activation. Released in response to an inflammatory stimulus, exerts its effect by binding to the G-protein-coupled receptors CXCR1 and CXCR2, primarily found in neutrophils, monocytes and endothelial cells. G-protein heterotrimer (alpha, beta, gamma subunits) constitutively binds to CXCR1/CXCR2 receptor and activation by IL8 leads to beta and gamma subunits release from Galpha (GNAI2 in neutrophils) and activation of several downstream signaling pathways including PI3K and MAPK pathways. The protein is Interleukin-8 (CXCL8) of Tursiops truncatus (Atlantic bottle-nosed dolphin).